The chain runs to 864 residues: MTARRLINIVPNTSKLDPLKEEDSTHLKQNQPKKFSTKELMLSEYTERKSCSLPLSKSRSGSSASSSTTGSNGKNIGTRRPSSNLDFNFASQDVVKNVLGNNNPHVPTAKCIRPISDDSIGTSSTEIFSSSHSNTTSDSLCTSDISSEEGEIANSKMEDNCFFKSMREADHRSNITPLKKSRPGSILQKTRTASSADKTICSMSTITTCIPSRQNSVSTPKLSRTVGLPGSSNTTNSIAASQTSFISENDSPLKHHCMSTATIQEPKLMPITKTPYVHSNSTSVILPYKTTQLTPSQRYRLRKEQNDQSLRKAIKMKEKFYEDQDVNLELQEGDVDGSLIWNIPMASLSTSSFLTLSKFNRKEMSLDSARGDEEILIQENNCEGKQHSSSALCVDKTFHQVHSTRKHTSNSSNTLKESCLDYKELPPTCIPGISPVSDSQYIQDTMKNLSQIYLHSSEKISKSILSGRSRSVQSLPLEFKEASSQGMEDLMLVSEDKLKAVSHFRPSWLPPKDFKERKLQDKQIYKNIDLASMEELQKNKERDEKAKKNEQNKVKFQHLLDRGITRNSSLSELKKIIWETPLISKVRLQIYSQLLQSDNCLITKCFIESFEEVMQLLNKMDFPKDKEFEIRQLIEHDVQEKVFYKNGTDKQVVSDLMLLLQLKSISQQGLVTGDEMLFYHFLTDQSFGTLKETWEMVNLIQMTCFSEICKEKYDSRILNPRGIVAHLLRKDEFKNEFNGGCLNSNTWWNILQRMDHKLFMWVMDVIIVHNGQNFANYPVKMEIFKDKVWEYYRSKKVIVNYKILVSLTVNVLLNYHFGYDNLKHLSDLDDKHFCIPLYTEDSIEEENLNNIFTKWWLHYYRKLR.

Disordered regions lie at residues 16 to 84 (LDPL…PSSN), 123 to 142 (SSTE…SLCT), and 213 to 235 (RQNS…SNTT). The span at 17–26 (DPLKEEDSTH) shows a compositional bias: basic and acidic residues. The span at 51–71 (CSLPLSKSRSGSSASSSTTGS) shows a compositional bias: low complexity. Residues 72 to 84 (NGKNIGTRRPSSN) are compositionally biased toward polar residues. Phosphoserine is present on residues S82 and S83. Positions 123–139 (SSTEIFSSSHSNTTSDS) are enriched in low complexity. Polar residues predominate over residues 213–222 (RQNSVSTPKL). 2 positions are modified to phosphoserine: S450 and S532.

This sequence belongs to the SBE2 family.

It localises to the golgi apparatus. Its function is as follows. With SBE22, is involved in cell wall integrity and polarity processes like bud growth, through the transport of CHS3 and UTR2 to sites of growth. This is Protein SBE2 (SBE2) from Saccharomyces cerevisiae (strain YJM789) (Baker's yeast).